The chain runs to 314 residues: Olfactory receptor 1E2 (314 aa).

Residues 1 to 25 (MMGQNQTSISDFLLLGLPIQPEQQN) lie on the Extracellular side of the membrane. N-linked (GlcNAc...) asparagine glycosylation occurs at Asn5. The helical transmembrane segment at 26–49 (LCYALFLAMYLTTLLGNLLIIVLI) threads the bilayer. The Cytoplasmic segment spans residues 50–57 (RLDSHLHT). Residues 58-79 (PMYLFLSNLSFSDLCFSSVTIP) traverse the membrane as a helical segment. Residues 80–100 (KLLQNMQNQDPSIPYADCLTQ) are Extracellular-facing. A disulfide bridge links Cys97 with Cys189. Residues 101 to 120 (MHFFLLFGDLESFLLVAMAY) traverse the membrane as a helical segment. Residues 121-139 (DRYVAICFPLHYTAIMSPM) lie on the Cytoplasmic side of the membrane. A helical membrane pass occupies residues 140 to 158 (LCLSVVALSWVLTTFHAML). Residues 159–196 (HTLLMARLCFCADNVIPHFFCDMSALLKLACSDTRVNE) lie on the Extracellular side of the membrane. The chain crosses the membrane as a helical span at residues 197-219 (WVIFIMGGLIVVIPFLLILGSYA). At 220–236 (RIVSSILKVPSFKGICK) the chain is on the cytoplasmic side. The helical transmembrane segment at 237–260 (ALSTCGSHLSVVSLFYGTVIGLYL) threads the bilayer. At 261–272 (CPSANSSTLKDT) the chain is on the extracellular side. A glycan (N-linked (GlcNAc...) asparagine) is linked at Asn265. The helical transmembrane segment at 273 to 292 (VMAMMYTVVTPMLNPFIYSL) threads the bilayer. The Cytoplasmic portion of the chain corresponds to 293–314 (RNRDMKGALERVICKRKNPFLL).

Belongs to the G-protein coupled receptor 1 family.

The protein localises to the cell membrane. Odorant receptor. The protein is Olfactory receptor 1E2 (OR1E2) of Pan troglodytes (Chimpanzee).